Reading from the N-terminus, the 279-residue chain is 5'-nucleotidase SurE 1 (279 aa).

The a divalent metal cation site is built by D12, D13, S45, and N103.

It belongs to the SurE nucleotidase family. The cofactor is a divalent metal cation.

The protein localises to the cytoplasm. It carries out the reaction a ribonucleoside 5'-phosphate + H2O = a ribonucleoside + phosphate. In terms of biological role, nucleotidase that shows phosphatase activity on nucleoside 5'-monophosphates. The polypeptide is 5'-nucleotidase SurE 1 (Chlamydia caviae (strain ATCC VR-813 / DSM 19441 / 03DC25 / GPIC) (Chlamydophila caviae)).